Here is a 296-residue protein sequence, read N- to C-terminus: Mycothiol acetyltransferase (296 aa).

2 consecutive N-acetyltransferase domains span residues 17–146 (YNHR…AVYD) and 156–296 (LKTA…VYEK). Glutamate 44 serves as a coordination point for 1D-myo-inositol 2-(L-cysteinylamino)-2-deoxy-alpha-D-glucopyranoside. 81-83 (LAV) is an acetyl-CoA binding site. Positions 183, 222, and 230 each coordinate 1D-myo-inositol 2-(L-cysteinylamino)-2-deoxy-alpha-D-glucopyranoside. Acetyl-CoA contacts are provided by residues 234 to 236 (VGL) and 241 to 247 (RGKGLGD). Tyrosine 268 provides a ligand contact to 1D-myo-inositol 2-(L-cysteinylamino)-2-deoxy-alpha-D-glucopyranoside.

Belongs to the acetyltransferase family. MshD subfamily. In terms of assembly, monomer.

It catalyses the reaction 1D-myo-inositol 2-(L-cysteinylamino)-2-deoxy-alpha-D-glucopyranoside + acetyl-CoA = mycothiol + CoA + H(+). Catalyzes the transfer of acetyl from acetyl-CoA to desacetylmycothiol (Cys-GlcN-Ins) to form mycothiol. The polypeptide is Mycothiol acetyltransferase (Corynebacterium efficiens (strain DSM 44549 / YS-314 / AJ 12310 / JCM 11189 / NBRC 100395)).